The primary structure comprises 345 residues: Protein-glutamate methylesterase/protein-glutamine glutaminase 2 (345 aa).

The Response regulatory domain occupies 7-124 (KVLVVDDSPV…TADMLGYRSL (118 aa)). At D58 the chain carries 4-aspartylphosphate. Residues 154 to 345 (STSQYQLIAI…LPQFLCDLLS (192 aa)) form the CheB-type methylesterase domain. Catalysis depends on residues S166, H192, and D289.

This sequence belongs to the CheB family. In terms of processing, phosphorylated by CheA. Phosphorylation of the N-terminal regulatory domain activates the methylesterase activity.

Its subcellular location is the cytoplasm. The catalysed reaction is [protein]-L-glutamate 5-O-methyl ester + H2O = L-glutamyl-[protein] + methanol + H(+). The enzyme catalyses L-glutaminyl-[protein] + H2O = L-glutamyl-[protein] + NH4(+). Functionally, involved in chemotaxis. Part of a chemotaxis signal transduction system that modulates chemotaxis in response to various stimuli. Catalyzes the demethylation of specific methylglutamate residues introduced into the chemoreceptors (methyl-accepting chemotaxis proteins or MCP) by CheR. Also mediates the irreversible deamidation of specific glutamine residues to glutamic acid. This is Protein-glutamate methylesterase/protein-glutamine glutaminase 2 from Vibrio vulnificus (strain YJ016).